Reading from the N-terminus, the 257-residue chain is Ras-related protein Rab-26 (257 aa).

The segment at 1 to 53 (MSRKKTPKSKGGSVPAASTLPAAANGPRLAHPRTARPGPEAPPNGPPQSGRPS) is disordered. Residues Ser73, Gly74, Val75, Gly76, Lys77, Thr78, Cys79, Ser96, and Thr97 each coordinate GTP. Residue Thr78 participates in Mg(2+) binding. 2 consecutive short sequence motifs (switch) follow at residues 87-102 (GAFLAGTFISTVGIDF) and 120-137 (DTAGQERFRSVTHAYYRD). Mg(2+) contacts are provided by Thr97 and Asp120. Positions 123, 178, 179, 181, 209, and 210 each coordinate GTP. S-geranylgeranyl cysteine attachment occurs at residues Cys254 and Cys255.

This sequence belongs to the small GTPase superfamily. Rab family. As to quaternary structure, interacts with ADRA2B. Interacts with RIMS1. The cofactor is Mg(2+). As to expression, expressed in pancreas, kidney, brain, submandibular gland, and lung.

The protein resides in the cytoplasmic vesicle. It is found in the secretory vesicle membrane. It localises to the golgi apparatus membrane. It catalyses the reaction GTP + H2O = GDP + phosphate + H(+). Its activity is regulated as follows. Regulated by guanine nucleotide exchange factors (GEFs) which promote the exchange of bound GDP for free GTP. Regulated by GTPase activating proteins (GAPs) which increase the GTP hydrolysis activity. Inhibited by GDP dissociation inhibitors (GDIs). Functionally, the small GTPases Rab are key regulators of intracellular membrane trafficking, from the formation of transport vesicles to their fusion with membranes. Rabs cycle between an inactive GDP-bound form and an active GTP-bound form that is able to recruit to membranes different set of downstream effectors directly responsible for vesicle formation, movement, tethering and fusion. RAB26 mediates transport of ADRA2A and ADRA2B from the Golgi to the cell membrane. Plays a role in the maturation of zymogenic granules and in pepsinogen secretion in the stomach. Plays a role in the secretion of amylase from acinar granules in the parotid gland. This is Ras-related protein Rab-26 from Rattus norvegicus (Rat).